The sequence spans 1484 residues: Chromatin remodeling regulator CECR2 (1484 aa).

A disordered region spans residues 170–241 (VQGKSNGELS…RHGSQGPGQG (72 aa)). Positions 197 to 209 (TGKRRGRPPKRKK) are enriched in basic residues. The segment covering 210–222 (LQEEILLSEKQEE) has biased composition (basic and acidic residues). Positions 223–234 (NSLASEPQTRHG) are enriched in polar residues. Ser-422 carries the phosphoserine modification. One can recognise a Bromo domain in the interval 434–538 (FELDDDFTAM…RCFHRAMMKH (105 aa)). Thr-546 is modified (phosphothreonine). Disordered stretches follow at residues 556–704 (EKRE…GPRL), 796–825 (GNHG…PRTL), 919–1053 (GVPY…SYPG), 1165–1259 (VMGG…LFSD), 1287–1320 (AKVP…LDLD), and 1442–1484 (YRPS…LDQS). A Phosphoserine modification is found at Ser-571. Residues 605 to 614 (SSGDDQSSSS) are compositionally biased toward low complexity. Ser-1014 carries the phosphoserine modification. Asymmetric dimethylarginine is present on residues Arg-1197 and Arg-1203. The span at 1243-1254 (SGPPASQPPPPR) shows a compositional bias: pro residues. Basic and acidic residues predominate over residues 1304-1320 (DESMERPESPKEFLDLD). At Ser-1312 the chain carries Phosphoserine. Residues 1451-1469 (PVQSQASFPKTPTAATSQE) show a composition bias toward polar residues. A compositionally biased stretch (pro residues) spans 1474–1484 (HKPPTLPLDQS).

Component of the CERF-1 ISWI chromatin remodeling complex (also called the CECR2-containing remodeling factor (CERF) complex) at least composed of CECR2 and SMARCA1. Component of the CERF-5 ISWI chromatin remodeling complex at least composed of SMARCA5/SNF2H and CECR2. LUZP1 is detected as part of the CERF-1 and CERF-5 complexes in embryonic stem (ES) cells where it is involved in complex stabilization but is not detected in the complexes in the testis. Interacts with CCAR2; CCAR2 may form part of the CERF-1 and/or CEF-5 ISWI chromatin remodeling complexes in ES cells. Interacts with acetylated lysine residues on histone H2A and H3 (in vitro). Interacts with LRPPRC. In terms of tissue distribution, highly expressed in skeletal muscle, thymus, placenta and lung. Expressed at lower level in brain, heart, colon, spleen, kidney.

It is found in the nucleus. In terms of biological role, regulatory subunit of the ATP-dependent CERF-1 and CERF-5 ISWI chromatin remodeling complexes, which form ordered nucleosome arrays on chromatin and facilitate access to DNA during DNA-templated processes such as DNA replication, transcription, and repair. The complexes do not have the ability to slide mononucleosomes to the center of a DNA template. The CERF-1 ISWI chromatin remodeling complex has a lower ATP hydrolysis rate than the CERF-5 ISWI chromatin remodeling complex. Plays a role in various processes during development: required during embryogenesis for neural tube closure and inner ear development. In adults, required for spermatogenesis, via the formation of ISWI-type chromatin complexes. In histone-modifying complexes, CECR2 recognizes and binds acylated histones: binds histones that are acetylated and/or butyrylated. May also be involved through its interaction with LRPPRC in the integration of cytoskeletal network with vesicular trafficking, nucleocytosolic shuttling, transcription, chromosome remodeling and cytokinesis. The chain is Chromatin remodeling regulator CECR2 (CECR2) from Homo sapiens (Human).